Reading from the N-terminus, the 320-residue chain is Foldase protein PrsA (320 aa).

The signal sequence occupies residues 1 to 20 (MKMINKLIVPVTASALLLGA). A lipid anchor (N-palmitoyl cysteine) is attached at cysteine 21. Cysteine 21 carries S-diacylglycerol cysteine lipidation. The PpiC domain occupies 139–245 (EDSKKASHIL…FGYHIIKADK (107 aa)). Residues 159–198 (EGLDDKEAKQKAEEIQKEVSKDPSKFGEIAKKESMDTGSA) are disordered.

Belongs to the PrsA family.

It is found in the cell membrane. The catalysed reaction is [protein]-peptidylproline (omega=180) = [protein]-peptidylproline (omega=0). Functionally, plays a major role in protein secretion by helping the post-translocational extracellular folding of several secreted proteins. This chain is Foldase protein PrsA, found in Staphylococcus aureus (strain bovine RF122 / ET3-1).